A 619-amino-acid chain; its full sequence is ATP-dependent RNA helicase DBP8 (619 aa).

A disordered region spans residues 1-149; it reads MAVSKKSRKS…NGLPSASKPS (149 aa). Acidic residues predominate over residues 46-67; that stretch reads EGNDESDEEDDDVSNEGEDEGE. A compositionally biased stretch (low complexity) spans 68 to 78; that stretch reads SSGSEAESSVA. Residues 93 to 105 show a composition bias toward acidic residues; that stretch reads LDAEGEEDKENEE. A compositionally biased stretch (polar residues) spans 137–147; it reads PQPNGLPSASK. The short motif at 152-180 is the Q motif element; sequence VTFESLGLSRPLITALASINIKKPTEIQA. The 174-residue stretch at 183–356 folds into the Helicase ATP-binding domain; that stretch reads VEPILSGRDC…NKEPPAGKQR (174 aa). ATP is bound at residue 196 to 203; it reads AKTGSGKT. The short motif at 304 to 307 is the DEAD box element; sequence DEAD. Residues 414 to 436 are disordered; the sequence is EREAALGKKGKKPKQAKEEEDAP. The region spanning 430-572 is the Helicase C-terminal domain; sequence KEEEDAPSVP…ELKLDEDKVL (143 aa).

This sequence belongs to the DEAD box helicase family. DDX49/DBP8 subfamily.

The protein resides in the nucleus. Its subcellular location is the nucleolus. It carries out the reaction ATP + H2O = ADP + phosphate + H(+). In terms of biological role, ATP-binding RNA helicase involved in 40S ribosomal subunit biogenesis and is required for the normal formation of 18S rRNAs through pre-rRNA processing at A0, A1 and A2 sites. Required for vegetative growth. The protein is ATP-dependent RNA helicase DBP8 (DBP8) of Cryptococcus neoformans var. neoformans serotype D (strain B-3501A) (Filobasidiella neoformans).